A 241-amino-acid chain; its full sequence is Putative ABC transporter ATP-binding protein CA_C0773 (241 aa).

In terms of domain architecture, ABC transporter spans 2–241; it reads IKLEKVSFTY…REFLMECNII (240 aa). 34 to 41 contributes to the ATP binding site; the sequence is GPNGSGKS.

It belongs to the ABC transporter superfamily.

The protein localises to the cell membrane. Functionally, probably part of an ABC transporter complex. Responsible for energy coupling to the transport system. This chain is Putative ABC transporter ATP-binding protein CA_C0773, found in Clostridium acetobutylicum (strain ATCC 824 / DSM 792 / JCM 1419 / IAM 19013 / LMG 5710 / NBRC 13948 / NRRL B-527 / VKM B-1787 / 2291 / W).